The primary structure comprises 152 residues: Nucleoside diphosphate kinase B (152 aa).

The interaction with AKAP13 stretch occupies residues 1-66; the sequence is MANLERTFIA…DRPFFPGLVK (66 aa). 6 residues coordinate ATP: lysine 12, phenylalanine 60, arginine 88, threonine 94, arginine 105, and asparagine 115. The active-site Pros-phosphohistidine intermediate is the histidine 118.

It belongs to the NDK family. Hexamer of two different chains: An and B (A6, A5B, A4B2, A3B3, A2B4, AB5, B6). Interacts with CAPN8. Interacts with AKAP13. Interacts with ITGB1BP1 (via C-terminal domain region). Interacts with BCL2L10. The cofactor is Mg(2+).

Its subcellular location is the cytoplasm. It localises to the cell projection. It is found in the lamellipodium. The protein resides in the ruffle. The protein localises to the nucleus. The enzyme catalyses a 2'-deoxyribonucleoside 5'-diphosphate + ATP = a 2'-deoxyribonucleoside 5'-triphosphate + ADP. It carries out the reaction a ribonucleoside 5'-diphosphate + ATP = a ribonucleoside 5'-triphosphate + ADP. It catalyses the reaction ATP + protein L-histidine = ADP + protein N-phospho-L-histidine.. Functionally, major role in the synthesis of nucleoside triphosphates other than ATP. The ATP gamma phosphate is transferred to the NDP beta phosphate via a ping-pong mechanism, using a phosphorylated active-site intermediate. Negatively regulates Rho activity by interacting with AKAP13/LBC. Acts as a transcriptional activator of the MYC gene; binds DNA non-specifically. Binds to both single-stranded guanine- and cytosine-rich strands within the nuclease hypersensitive element (NHE) III(1) region of the MYC gene promoter. Does not bind to duplex NHE III(1). Has G-quadruplex (G4) DNA-binding activity, which is independent of its nucleotide-binding and kinase activity. Binds both folded and unfolded G4 with similar low nanomolar affinities. Stabilizes folded G4s regardless of whether they are prefolded or not. Exhibits histidine protein kinase activity. The polypeptide is Nucleoside diphosphate kinase B (NME2) (Pongo abelii (Sumatran orangutan)).